The primary structure comprises 353 residues: 3-isopropylmalate dehydrogenase (353 aa).

75 to 88 (GPKWENLPHEHKPE) serves as a coordination point for NAD(+). Substrate contacts are provided by R95, R105, R133, and D219. D219, D243, and D247 together coordinate Mg(2+). 276–288 (GSAPDIAGKNIAN) serves as a coordination point for NAD(+).

It belongs to the isocitrate and isopropylmalate dehydrogenases family. LeuB type 1 subfamily. As to quaternary structure, homodimer. Mg(2+) serves as cofactor. Mn(2+) is required as a cofactor.

The protein localises to the cytoplasm. The catalysed reaction is (2R,3S)-3-isopropylmalate + NAD(+) = 4-methyl-2-oxopentanoate + CO2 + NADH. The protein operates within amino-acid biosynthesis; L-leucine biosynthesis; L-leucine from 3-methyl-2-oxobutanoate: step 3/4. Catalyzes the oxidation of 3-carboxy-2-hydroxy-4-methylpentanoate (3-isopropylmalate) to 3-carboxy-4-methyl-2-oxopentanoate. The product decarboxylates to 4-methyl-2 oxopentanoate. This is 3-isopropylmalate dehydrogenase from Chlorobium luteolum (strain DSM 273 / BCRC 81028 / 2530) (Pelodictyon luteolum).